Reading from the N-terminus, the 437-residue chain is GTPase Der (437 aa).

EngA-type G domains lie at P4 to A167 and I175 to R352. GTP is bound by residues G10–S17, D57–I61, N119–D122, G181–S188, D229–I233, and N294–D297. The region spanning Q353–Q437 is the KH-like domain.

Belongs to the TRAFAC class TrmE-Era-EngA-EngB-Septin-like GTPase superfamily. EngA (Der) GTPase family. As to quaternary structure, associates with the 50S ribosomal subunit.

Functionally, GTPase that plays an essential role in the late steps of ribosome biogenesis. The sequence is that of GTPase Der from Limosilactobacillus reuteri (strain DSM 20016) (Lactobacillus reuteri).